The sequence spans 274 residues: 3-methyl-2-oxobutanoate hydroxymethyltransferase (274 aa).

Mg(2+) contacts are provided by Asp-49 and Asp-88. 3-methyl-2-oxobutanoate is bound by residues 49–50 (DS), Asp-88, and Lys-118. Glu-120 contacts Mg(2+). The active-site Proton acceptor is the Glu-187.

Belongs to the PanB family. As to quaternary structure, homodecamer; pentamer of dimers. Mg(2+) serves as cofactor.

The protein localises to the cytoplasm. It carries out the reaction 3-methyl-2-oxobutanoate + (6R)-5,10-methylene-5,6,7,8-tetrahydrofolate + H2O = 2-dehydropantoate + (6S)-5,6,7,8-tetrahydrofolate. It functions in the pathway cofactor biosynthesis; (R)-pantothenate biosynthesis; (R)-pantoate from 3-methyl-2-oxobutanoate: step 1/2. In terms of biological role, catalyzes the reversible reaction in which hydroxymethyl group from 5,10-methylenetetrahydrofolate is transferred onto alpha-ketoisovalerate to form ketopantoate. The polypeptide is 3-methyl-2-oxobutanoate hydroxymethyltransferase (Rhodopseudomonas palustris (strain HaA2)).